Here is a 420-residue protein sequence, read N- to C-terminus: Histidine--tRNA ligase (420 aa).

It belongs to the class-II aminoacyl-tRNA synthetase family. As to quaternary structure, homodimer.

It is found in the cytoplasm. The enzyme catalyses tRNA(His) + L-histidine + ATP = L-histidyl-tRNA(His) + AMP + diphosphate + H(+). This Thermodesulfovibrio yellowstonii (strain ATCC 51303 / DSM 11347 / YP87) protein is Histidine--tRNA ligase.